The chain runs to 303 residues: UDP-3-O-acyl-N-acetylglucosamine deacetylase (303 aa).

The Zn(2+) site is built by His-78, His-237, and Asp-241. His-264 (proton donor) is an active-site residue.

It belongs to the LpxC family. Zn(2+) serves as cofactor.

It carries out the reaction a UDP-3-O-[(3R)-3-hydroxyacyl]-N-acetyl-alpha-D-glucosamine + H2O = a UDP-3-O-[(3R)-3-hydroxyacyl]-alpha-D-glucosamine + acetate. The protein operates within glycolipid biosynthesis; lipid IV(A) biosynthesis; lipid IV(A) from (3R)-3-hydroxytetradecanoyl-[acyl-carrier-protein] and UDP-N-acetyl-alpha-D-glucosamine: step 2/6. Catalyzes the hydrolysis of UDP-3-O-myristoyl-N-acetylglucosamine to form UDP-3-O-myristoylglucosamine and acetate, the committed step in lipid A biosynthesis. The chain is UDP-3-O-acyl-N-acetylglucosamine deacetylase from Pseudomonas putida (strain ATCC 700007 / DSM 6899 / JCM 31910 / BCRC 17059 / LMG 24140 / F1).